Reading from the N-terminus, the 238-residue chain is Transcription termination/antitermination protein NusG (238 aa).

It belongs to the NusG family.

Its function is as follows. Participates in transcription elongation, termination and antitermination. This is Transcription termination/antitermination protein NusG from Mycobacterium tuberculosis (strain CDC 1551 / Oshkosh).